The primary structure comprises 405 residues: MTIDTRALGFGSSERAVYAADPWTTRGRLYQEDGSPTRSDFQRDRDRIVHTTAFRRLKHKTQVFIAQDGDHYRTRLTHTIEVAQIARALARALKLDEDLAEGVALVHDFGHTPFGHTGEDALHEVLLPYGGFDHNAQSLRIVTKLERRYAEFDGINLTWESLEGLVKHNGPLLTADGVGTRGPVPQPILDYCELHDLELATYASLEAQVAAIADDIAYNTHDIDDGLRSGYLTFDMLEEIPFLAGLMAEVRARYPHLEPSRFTHEIMRRQITRMVEDVIGVAQQRLSLLRPESAADIRAADRVIATFSEGMAETDRQIKAMLFKRIYRNPDIMRIRAGAAQIVTDLFAAYMANPKEMQSHYWVDHIAGLSDAPKARHVGDYLAGMTDTYAISAHRRLFDHTPDLR.

An HD domain is found at 75–219 (RLTHTIEVAQ…AAIADDIAYN (145 aa)).

Belongs to the dGTPase family. Type 2 subfamily.

The polypeptide is Deoxyguanosinetriphosphate triphosphohydrolase-like protein (Rhizobium johnstonii (strain DSM 114642 / LMG 32736 / 3841) (Rhizobium leguminosarum bv. viciae)).